The primary structure comprises 295 residues: Aspartate carbamoyltransferase catalytic subunit (295 aa).

Residues arginine 49 and threonine 50 each coordinate carbamoyl phosphate. Lysine 77 serves as a coordination point for L-aspartate. Carbamoyl phosphate contacts are provided by arginine 99, histidine 127, and glutamine 130. Residues arginine 161 and arginine 212 each coordinate L-aspartate. Carbamoyl phosphate is bound by residues glycine 251 and proline 252.

Belongs to the aspartate/ornithine carbamoyltransferase superfamily. ATCase family. In terms of assembly, heterododecamer (2C3:3R2) of six catalytic PyrB chains organized as two trimers (C3), and six regulatory PyrI chains organized as three dimers (R2).

It carries out the reaction carbamoyl phosphate + L-aspartate = N-carbamoyl-L-aspartate + phosphate + H(+). It functions in the pathway pyrimidine metabolism; UMP biosynthesis via de novo pathway; (S)-dihydroorotate from bicarbonate: step 2/3. Functionally, catalyzes the condensation of carbamoyl phosphate and aspartate to form carbamoyl aspartate and inorganic phosphate, the committed step in the de novo pyrimidine nucleotide biosynthesis pathway. The chain is Aspartate carbamoyltransferase catalytic subunit from Campylobacter jejuni subsp. jejuni serotype O:23/36 (strain 81-176).